Here is a 113-residue protein sequence, read N- to C-terminus: Large ribosomal subunit protein uL22 (113 aa).

It belongs to the universal ribosomal protein uL22 family. As to quaternary structure, part of the 50S ribosomal subunit.

Functionally, this protein binds specifically to 23S rRNA; its binding is stimulated by other ribosomal proteins, e.g. L4, L17, and L20. It is important during the early stages of 50S assembly. It makes multiple contacts with different domains of the 23S rRNA in the assembled 50S subunit and ribosome. In terms of biological role, the globular domain of the protein is located near the polypeptide exit tunnel on the outside of the subunit, while an extended beta-hairpin is found that lines the wall of the exit tunnel in the center of the 70S ribosome. This Desulforudis audaxviator (strain MP104C) protein is Large ribosomal subunit protein uL22.